A 319-amino-acid polypeptide reads, in one-letter code: Telomere-binding protein cav (319 aa).

A required for binding to Su(var)205 region spans residues 107–312 (RRKMVQPYPE…SISFQNSGSE (206 aa)). Disordered stretches follow at residues 141–163 (WQKQKRRNQSAHATQPDSQDNEV) and 186–248 (PSDL…PDYY). 2 consecutive short sequence motifs (su(var)205-binding Pro-containing repeat) follow at residues 220 to 224 (PETQM) and 273 to 279 (PETEMNE). The span at 291-311 (SMSIGPSINSDGSISFQNSGS) shows a compositional bias: polar residues. The segment at 291 to 319 (SMSIGPSINSDGSISFQNSGSEPIDVDVN) is disordered.

As to quaternary structure, interacts (via C-terminus) with Su(var)205 dimer (via hinge and chromoshadow domain) and with moi to form the terminin, telomere-capping, complex. Interacts with HP6, which is also part of the terminin complex.

It is found in the nucleus. The protein localises to the chromosome. Its subcellular location is the telomere. Binds to chromosome ends in a sequence-dependent manner and is required for telomere capping. The protein is Telomere-binding protein cav of Drosophila yakuba (Fruit fly).